A 77-amino-acid polypeptide reads, in one-letter code: Small ribosomal subunit protein bS18 (77 aa).

The protein belongs to the bacterial ribosomal protein bS18 family. As to quaternary structure, part of the 30S ribosomal subunit. Forms a tight heterodimer with protein bS6.

Binds as a heterodimer with protein bS6 to the central domain of the 16S rRNA, where it helps stabilize the platform of the 30S subunit. The polypeptide is Small ribosomal subunit protein bS18 (Bacillus cereus (strain ATCC 10987 / NRS 248)).